The primary structure comprises 964 residues: Protein HIRA (964 aa).

6 WD repeats span residues 10 to 50 (RHEG…KDNT), 64 to 103 (DHFGSVNCVRWAKHGRYLASGSDDQVILIHERKAGSGTSE), 123 to 162 (GHTADVVDLSWSPDDSTLASGSLDNTIHIWNMNNGICTAV), 165 to 204 (GHTSLVKGVTWDPIGSFIASQSDDKTVMIWRTSDWSLAHK), 259 to 331 (GHNA…PLFV), and 335 to 376 (FFSQ…HRLS). The disordered stretch occupies residues 453–490 (SHEDSKKTAGPTADDVKKGNQLSSPVKQREYRRPDGRK). The segment covering 479 to 490 (KQREYRRPDGRK) has biased composition (basic and acidic residues). One copy of the WD 7 repeat lies at 644-685 (LWSDRISGKVTVLAGNANFWAVGCEDGFLQVYTRCGVRAMPA). Positions 920-940 (ASNRKVQRLLNEFMDLLLEYE) form a coiled coil.

Belongs to the WD repeat HIR1 family. Interacts with RS2. As to expression, more abundant in apices and young leaf primordia than in fully expanded leaf tissues.

Its subcellular location is the nucleus. In terms of biological role, histone chaperone involved in maintining knox genes silencing throughout leaf development. The protein is Protein HIRA of Zea mays (Maize).